The sequence spans 770 residues: MMDQARSAFSTLFGGEPLSYTRFSLARQVDGDNSHVEMKLAADEEENVDNNMRGNHASVPKPKRCNGFICYGTIAVVLFFLIGFMIGYLGYCKRVEPKAGCERPTGTEALGTERTEPSETEEYFPETPSRLFWTDLKTMLSERLSNTDFTNTMRWLNENSYVPREAGSQKDESLALLIENRFREFQLSKSWRDEHFVEIQVKSSNAQNTVTIVDMESDLVYLAESPEGYVAYSKATTVTGRLVHVNFGTKKDFENLKSPVNGSLVIARAGKITFAEKVANAQSYNALGVLIYMDQARFPIVNARIPFFGHAHLGTGDPYTPGFPSFNHTQFPPSQSSGLPSIPVQTISRAAAEKLFENMEGDCPSAWEIDPSCRLETSSNKNVNLTVNNVLKEIRIFNVFGVIKGFEEPDRYVVIGAQRDAWGPGAAKSSVGTALLLELARIFSDMVLKGGFKPSRSIVFASWSAGDFGAIGATEWLEGYLSSLHLKAFTYINLDKAILGTSNFKVSASPLLYSLLEKTMKDVKHPITGQSLYRDSNWINKVEKLSLDNAAFPFLAYSGIPAVSFCFCEDTDYPYLGTTMDLYENLNQKIPQLNKMARGAAEVAGQLIMKLTYDLELNLNYEMYNDRILSFVRDMNQFRTDIKEMGLNLQWLYSARGDFFRATSRLTTDYKNAERTNRFVMREINDRIMKVEHNFLSPYVSPRDSPFRHIFWGSGSHTLPALVEHLKLRQKNKSAFNETLLRNQLALATWTIQGAANALSGDIWDIDNEF.

Over 1–70 the chain is Cytoplasmic; sequence MMDQARSAFS…KPKRCNGFIC (70 aa). The tract at residues 1–70 is mediates interaction with SH3BP4; it reads MMDQARSAFS…KPKRCNGFIC (70 aa). A phosphoserine mark is found at Ser10 and Ser19. Tyr20 is modified (phosphotyrosine). Residues 20-23 carry the Endocytosis signal motif; it reads YTRF. The residue at position 21 (Thr21) is a Phosphothreonine. Ser24 is modified (phosphoserine). A Stop-transfer sequence motif is present at residues 61–64; sequence KPKR. 2 S-palmitoyl cysteine lipidation sites follow: Cys65 and Cys70. A helical; Signal-anchor for type II membrane protein membrane pass occupies residues 71 to 90; it reads YGTIAVVLFFLIGFMIGYLG. Topologically, residues 91–770 are extracellular; it reads YCKRVEPKAG…GDIWDIDNEF (680 aa). Residues 102-122 are disordered; sequence ERPTGTEALGTERTEPSETEE. A glycan (O-linked (GalNAc...) threonine) is linked at Thr107. Residues 233 to 323 enclose the PA domain; that stretch reads SKATTVTGRL…GTGDPYTPGF (91 aa). N-linked (GlcNAc...) asparagine glycosylation is found at Asn261, Asn327, and Asn384. Residues 579 to 770 are ligand-binding; that stretch reads TMDLYENLNQ…GDIWDIDNEF (192 aa). The short motif at 656–658 is the Cell attachment site element; the sequence is RGD. N-linked (GlcNAc...) asparagine glycosylation is found at Asn732 and Asn737.

The protein belongs to the peptidase M28 family. M28B subfamily. As to quaternary structure, homodimer; disulfide-linked. Binds one transferrin molecule per subunit. Interacts with SH3BP4. Interacts with STEAP3; facilitates TFRC endocytosis in erythroid precursor cells. In terms of processing, stearoylated by ZDHHC6 which inhibits TFRC-mediated activation of the JNK pathway and promotes mitochondrial fragmentation. Stearoylation does not affect iron uptake. Post-translationally, N- and O-glycosylated, phosphorylated and palmitoylated.

Its subcellular location is the cell membrane. The protein resides in the melanosome. In terms of biological role, cellular uptake of iron occurs via receptor-mediated endocytosis of ligand-occupied transferrin receptor into specialized endosomes. Endosomal acidification leads to iron release. The apotransferrin-receptor complex is then recycled to the cell surface with a return to neutral pH and the concomitant loss of affinity of apotransferrin for its receptor. Transferrin receptor is necessary for development of erythrocytes and the nervous system. Positively regulates T and B cell proliferation through iron uptake. Acts as a lipid sensor that regulates mitochondrial fusion by regulating activation of the JNK pathway. When dietary levels of stearate (C18:0) are low, promotes activation of the JNK pathway, resulting in HUWE1-mediated ubiquitination and subsequent degradation of the mitofusin MFN2 and inhibition of mitochondrial fusion. When dietary levels of stearate (C18:0) are high, TFRC stearoylation inhibits activation of the JNK pathway and thus degradation of the mitofusin MFN2. Mediates uptake of NICOL1 into fibroblasts where it may regulate extracellular matrix production. This is Transferrin receptor protein 1 (TFRC) from Canis lupus familiaris (Dog).